A 429-amino-acid polypeptide reads, in one-letter code: Ubiquinone hydroxylase UbiL (429 aa).

The tract at residues 1–22 (MSEPLLRGLAAGDPPSATGPVT) is disordered.

It belongs to the UbiH/COQ6 family. FAD serves as cofactor.

It carries out the reaction a 2-(all-trans-polyprenyl)phenol + NADPH + O2 + H(+) = a 3-(all-trans-polyprenyl)benzene-1,2-diol + NADP(+) + H2O. Its pathway is cofactor biosynthesis; ubiquinone biosynthesis. Its function is as follows. Catalyzes the hydroxylation of two positions of the aromatic ring during ubiquinone biosynthesis. The sequence is that of Ubiquinone hydroxylase UbiL from Rhodospirillum rubrum (strain ATCC 11170 / ATH 1.1.1 / DSM 467 / LMG 4362 / NCIMB 8255 / S1).